The following is a 407-amino-acid chain: MSLKAIVFDRVLGKCSVKILDQLLLPYQTQYLTINTIDDGYRSIKSMQVRGAPAIAIVGVLSTLMECQLLLQESFVKTQSFYDLTQLEKILNERLDLLLSSRPTAVNLSNAITDLRKLISNDIGKTYNSLFQYACDIIDHDYADNFTMGENGAKHLLAQLEKEAFEGDFGVLTICNTGSLATSGYGTALGVIRSLYERTKKQISGDEQPKRTKTSNAKMVRVFPLETRPYNQGSRLTAYELLHDEIPSTLITDSSISYLVSTSKIPIKAAFVGADRIVKNGDTANKIGTYQLSIVCRHFGIKFYVVAPTTTFDSNTETGDKIVVEERPPNEFRFVQGTLIDGTDPTPVLNESKTPVKAKVGITPLDMPVWNPSFDITPYTHIDGIITEKGVFAKDENGNFHLETAFQ.

Residue D275 is the Proton donor of the active site.

The protein belongs to the eIF-2B alpha/beta/delta subunits family. MtnA subfamily.

It localises to the cytoplasm. Its subcellular location is the nucleus. The catalysed reaction is 5-(methylsulfanyl)-alpha-D-ribose 1-phosphate = 5-(methylsulfanyl)-D-ribulose 1-phosphate. It participates in amino-acid biosynthesis; L-methionine biosynthesis via salvage pathway; L-methionine from S-methyl-5-thio-alpha-D-ribose 1-phosphate: step 1/6. Functionally, catalyzes the interconversion of methylthioribose-1-phosphate (MTR-1-P) into methylthioribulose-1-phosphate (MTRu-1-P). The chain is Methylthioribose-1-phosphate isomerase from Kluyveromyces lactis (strain ATCC 8585 / CBS 2359 / DSM 70799 / NBRC 1267 / NRRL Y-1140 / WM37) (Yeast).